A 194-amino-acid polypeptide reads, in one-letter code: Peptidyl-tRNA hydrolase (194 aa).

TRNA is bound at residue tyrosine 17. The active-site Proton acceptor is the histidine 22. TRNA-binding residues include phenylalanine 68, asparagine 70, and asparagine 116.

It belongs to the PTH family. As to quaternary structure, monomer.

It is found in the cytoplasm. It catalyses the reaction an N-acyl-L-alpha-aminoacyl-tRNA + H2O = an N-acyl-L-amino acid + a tRNA + H(+). In terms of biological role, hydrolyzes ribosome-free peptidyl-tRNAs (with 1 or more amino acids incorporated), which drop off the ribosome during protein synthesis, or as a result of ribosome stalling. Functionally, catalyzes the release of premature peptidyl moieties from peptidyl-tRNA molecules trapped in stalled 50S ribosomal subunits, and thus maintains levels of free tRNAs and 50S ribosomes. The chain is Peptidyl-tRNA hydrolase from Haemophilus influenzae (strain PittGG).